The following is a 198-amino-acid chain: Large ribosomal subunit protein bL9 (198 aa).

Over residues 156–166 the composition is skewed to basic and acidic residues; the sequence is RGEDISTRQED. Residues 156-198 form a disordered region; that stretch reads RGEDISTRQEDQDAAAEALAAAGEFFDPEAHNDGEQEEEAGDK.

It belongs to the bacterial ribosomal protein bL9 family.

Functionally, binds to the 23S rRNA. This Rhodopseudomonas palustris (strain BisB18) protein is Large ribosomal subunit protein bL9.